The following is a 150-amino-acid chain: Large ribosomal subunit protein bL9 (150 aa).

This sequence belongs to the bacterial ribosomal protein bL9 family.

Its function is as follows. Binds to the 23S rRNA. The protein is Large ribosomal subunit protein bL9 of Shewanella denitrificans (strain OS217 / ATCC BAA-1090 / DSM 15013).